The primary structure comprises 313 residues: Proline iminopeptidase (313 aa).

One can recognise an AB hydrolase-1 domain in the interval 35-298 (KPVVILHGGP…TPGAGHSAFE (264 aa)). Residue Ser110 is the Nucleophile of the active site. Asp266 is an active-site residue. The active-site Proton donor is the His294.

The protein belongs to the peptidase S33 family.

It is found in the cytoplasm. It carries out the reaction Release of N-terminal proline from a peptide.. Its function is as follows. Specifically catalyzes the removal of N-terminal proline residues from peptides. This chain is Proline iminopeptidase (pip), found in Xylella fastidiosa (strain Temecula1 / ATCC 700964).